A 772-amino-acid polypeptide reads, in one-letter code: Cellulosomal-scaffolding protein B (772 aa).

The region spanning 1-80 (DPSKSFDSAI…TTFVAGGVNL (80 aa)) is the Cohesin 1 domain. A linker (Pro/Thr-rich) region spans residues 81 to 93 (GSSVPTTQPNVPS). The Cohesin 2 domain maps to 94–240 (DGVVVEIGKV…VNVGNATPTK (147 aa)). Residues 235-276 (NATPTKGATPTNTATPTKSATATPPGHSVPTNTPTNTPANTP) are compositionally biased toward low complexity. Disordered regions lie at residues 235–277 (NATP…NTPV) and 438–464 (VVPS…PSDD). The segment at 241 to 272 (GATPTNTATPTKSATATPPGHSVPTNTPTNTP) is linker (Pro/Thr-rich). The 159-residue stretch at 277 to 435 (VSGNLKVEFY…GVLVWGKEPG (159 aa)) folds into the CBM3 domain. Over residues 438–461 (VVPSTQPVTTPPATTKPPATTIPP) the composition is skewed to low complexity. The linker (Pro/Thr-rich) stretch occupies residues 440-461 (PSTQPVTTPPATTKPPATTIPP). A Cohesin 3 domain is found at 462-607 (SDDPNAIKIK…ETDLINGGVL (146 aa)). In terms of domain architecture, Dockerin spans 704–771 (IMMWVGDIVK…FGATSSDYDA (68 aa)).

Post-translationally, O-glycosylated on most but not all Thr residues of the linker units.

The protein resides in the secreted. In terms of biological role, acts as a scaffolding protein in the cellulosome. It promotes binding of cellulose to the catalytic domains of the cellulolytic enzymes probably through the binding of the nine repeated domains with dockerin domains present in catalytic subunits of the cellulosome. The sequence is that of Cellulosomal-scaffolding protein B (cipB) from Acetivibrio thermocellus (Hungateiclostridium thermocellum).